Consider the following 396-residue polypeptide: Phosphoglycerate kinase (396 aa).

Substrate contacts are provided by residues 21 to 23 (DFN), Arg36, 59 to 62 (HLGK), Arg119, and Arg156. ATP-binding positions include Lys206, Gly294, Glu325, and 352 to 355 (GGDS).

This sequence belongs to the phosphoglycerate kinase family. Monomer.

It localises to the cytoplasm. It catalyses the reaction (2R)-3-phosphoglycerate + ATP = (2R)-3-phospho-glyceroyl phosphate + ADP. Its pathway is carbohydrate degradation; glycolysis; pyruvate from D-glyceraldehyde 3-phosphate: step 2/5. The chain is Phosphoglycerate kinase from Listeria monocytogenes serovar 1/2a (strain ATCC BAA-679 / EGD-e).